A 1203-amino-acid polypeptide reads, in one-letter code: DNA-directed RNA polymerase subunit beta' (1203 aa).

Zn(2+)-binding residues include cysteine 60, cysteine 62, cysteine 75, and cysteine 78. Mg(2+)-binding residues include aspartate 449, aspartate 451, and aspartate 453. Residues cysteine 818, cysteine 892, cysteine 899, and cysteine 902 each coordinate Zn(2+).

This sequence belongs to the RNA polymerase beta' chain family. As to quaternary structure, the RNAP catalytic core consists of 2 alpha, 1 beta, 1 beta' and 1 omega subunit. When a sigma factor is associated with the core the holoenzyme is formed, which can initiate transcription. Mg(2+) is required as a cofactor. Zn(2+) serves as cofactor.

The catalysed reaction is RNA(n) + a ribonucleoside 5'-triphosphate = RNA(n+1) + diphosphate. In terms of biological role, DNA-dependent RNA polymerase catalyzes the transcription of DNA into RNA using the four ribonucleoside triphosphates as substrates. The polypeptide is DNA-directed RNA polymerase subunit beta' (Bacillus mycoides (strain KBAB4) (Bacillus weihenstephanensis)).